A 490-amino-acid chain; its full sequence is Bifunctional protein HldE (490 aa).

Residues 1–330 form a ribokinase region; it reads MLDFEAVLPA…RKVLPPASLA (330 aa). 205–208 lines the ATP pocket; sequence NRKE. Asp275 is an active-site residue. The cytidylyltransferase stretch occupies residues 358–490; that stretch reads FTNGCFDILH…LVARAQNGKA (133 aa).

It in the N-terminal section; belongs to the carbohydrate kinase PfkB family. In the C-terminal section; belongs to the cytidylyltransferase family. Homodimer.

It carries out the reaction D-glycero-beta-D-manno-heptose 7-phosphate + ATP = D-glycero-beta-D-manno-heptose 1,7-bisphosphate + ADP + H(+). The enzyme catalyses D-glycero-beta-D-manno-heptose 1-phosphate + ATP + H(+) = ADP-D-glycero-beta-D-manno-heptose + diphosphate. It participates in nucleotide-sugar biosynthesis; ADP-L-glycero-beta-D-manno-heptose biosynthesis; ADP-L-glycero-beta-D-manno-heptose from D-glycero-beta-D-manno-heptose 7-phosphate: step 1/4. The protein operates within nucleotide-sugar biosynthesis; ADP-L-glycero-beta-D-manno-heptose biosynthesis; ADP-L-glycero-beta-D-manno-heptose from D-glycero-beta-D-manno-heptose 7-phosphate: step 3/4. Its function is as follows. Catalyzes the phosphorylation of D-glycero-D-manno-heptose 7-phosphate at the C-1 position to selectively form D-glycero-beta-D-manno-heptose-1,7-bisphosphate. Catalyzes the ADP transfer from ATP to D-glycero-beta-D-manno-heptose 1-phosphate, yielding ADP-D-glycero-beta-D-manno-heptose. The polypeptide is Bifunctional protein HldE (Rhodopseudomonas palustris (strain BisB18)).